The primary structure comprises 558 residues: Formate--tetrahydrofolate ligase (558 aa).

An ATP-binding site is contributed by 66 to 73 (TPAGEGKT).

This sequence belongs to the formate--tetrahydrofolate ligase family.

It carries out the reaction (6S)-5,6,7,8-tetrahydrofolate + formate + ATP = (6R)-10-formyltetrahydrofolate + ADP + phosphate. The protein operates within one-carbon metabolism; tetrahydrofolate interconversion. The chain is Formate--tetrahydrofolate ligase from Neisseria meningitidis serogroup C / serotype 2a (strain ATCC 700532 / DSM 15464 / FAM18).